We begin with the raw amino-acid sequence, 256 residues long: 1-(5-phosphoribosyl)-5-[(5-phosphoribosylamino)methylideneamino] imidazole-4-carboxamide isomerase (256 aa).

The Proton acceptor role is filled by Asp-8. The active-site Proton donor is Asp-130.

It belongs to the HisA/HisF family.

The protein resides in the cytoplasm. The enzyme catalyses 1-(5-phospho-beta-D-ribosyl)-5-[(5-phospho-beta-D-ribosylamino)methylideneamino]imidazole-4-carboxamide = 5-[(5-phospho-1-deoxy-D-ribulos-1-ylimino)methylamino]-1-(5-phospho-beta-D-ribosyl)imidazole-4-carboxamide. It participates in amino-acid biosynthesis; L-histidine biosynthesis; L-histidine from 5-phospho-alpha-D-ribose 1-diphosphate: step 4/9. The polypeptide is 1-(5-phosphoribosyl)-5-[(5-phosphoribosylamino)methylideneamino] imidazole-4-carboxamide isomerase (Chlorobium phaeobacteroides (strain DSM 266 / SMG 266 / 2430)).